A 266-amino-acid chain; its full sequence is Undecaprenyl-diphosphatase (266 aa).

Helical transmembrane passes span 1 to 21 (MDTFQVIILALIQGLTEFLPI), 39 to 59 (QGLSFDVAVNTGSLLAVVMYF), 87 to 107 (WWIILATIPAVIIGFSAKDFI), 111 to 131 (FRSIEVIAATTIIFGLLLWWA), 144 to 164 (VGWKKALVIGIAQAMALIPGT), 183 to 203 (AAARFSFLMSVPVSLGAAILV), 218 to 238 (ALGLGILVSFIAAYICIHYFL), and 246 to 266 (MTPFVIYRLALGAVLCWIIFL).

This sequence belongs to the UppP family.

It is found in the cell inner membrane. The enzyme catalyses di-trans,octa-cis-undecaprenyl diphosphate + H2O = di-trans,octa-cis-undecaprenyl phosphate + phosphate + H(+). Catalyzes the dephosphorylation of undecaprenyl diphosphate (UPP). Confers resistance to bacitracin. This chain is Undecaprenyl-diphosphatase, found in Shewanella pealeana (strain ATCC 700345 / ANG-SQ1).